The primary structure comprises 439 residues: 26S proteasome regulatory subunit 4 (439 aa).

Disordered stretches follow at residues 1–48 and 82–104; these read MGQN…AMKL and ERLK…LRGT. Basic and acidic residues-rich tracts occupy residues 12–25 and 82–102; these read GEKK…KKYE and ERLK…DDLR. 225 to 232 serves as a coordination point for ATP; that stretch reads GPPGTGKT.

Belongs to the AAA ATPase family. In terms of assembly, interacts with PSMD5.

Its subcellular location is the cytoplasm. It is found in the nucleus. The 26S proteasome is involved in the ATP-dependent degradation of ubiquitinated proteins. The regulatory (or ATPase) complex confers ATP dependency and substrate specificity to the 26S complex. The polypeptide is 26S proteasome regulatory subunit 4 (Rpt2) (Drosophila melanogaster (Fruit fly)).